The primary structure comprises 335 residues: Legumin type B (335 aa).

2 disordered regions span residues 47–87 and 102–155; these read PETQ…GNSV and TEED…GRNG. Residues 105-118 are compositionally biased toward basic and acidic residues; it reads DTAKRLRSPRDKRN. Residues 135–144 are compositionally biased toward acidic residues; the sequence is QQEEEEQEEE. The 148-residue stretch at 167-314 folds into the Cupin type-1 domain; that stretch reads ENIAQPARAD…AFGLRQRQVT (148 aa).

Belongs to the 11S seed storage protein (globulins) family. In terms of assembly, hexamer; each subunit is composed of an acidic and a basic chain derived from a single precursor and linked by a disulfide bond.

Functionally, this protein found in the seeds of many leguminous and non-leguminous plants is the source of sulfur-containing amino acids in seed meals. This is Legumin type B (LEB7) from Vicia faba (Broad bean).